The following is an 869-amino-acid chain: Speckle targeted PIP5K1A-regulated poly(A) polymerase (869 aa).

A Matrin-type zinc finger spans residues 16-46 (FRCCLCDVTTANRPSLDAHLKGRKHRDLVQL). Residues 56–128 (RSVFVSGFPR…HGLRVRPREQ (73 aa)) enclose the RRM domain. The disordered stretch occupies residues 114–144 (HSLGGHGLRVRPREQKEFQSPASKSPKGVDS). Position 205 (serine 205) interacts with ATP. Aspartate 216 and aspartate 218 together coordinate Mg(2+). UTP is bound by residues aspartate 216 and aspartate 218. Disordered regions lie at residues 226–247 (MEET…LDSA) and 259–335 (CTPA…ASKD). Polar residues-rich tracts occupy residues 266–276 (DSLSPTSVQES) and 283–299 (TPSS…LGSD). Basic and acidic residues predominate over residues 314 to 335 (QEDRKEGKQGKELELAEEASKD). Asparagine 395 contacts ATP. Asparagine 395, arginine 417, tyrosine 435, and histidine 552 together coordinate UTP. A PAP-associated domain is found at 494–552 (LSSLLAQFFSCVSCLDLSGSLLSLREGRPLMVAEGLPSDLWEGLRLGPMNLQDPFDLSH). A KA1; binds the bulging loops of U6 snRNA but is dispensable for terminal uridylyltransferase activity region spans residues 601-869 (SSPSSLLSAK…IPQALKNLLK (269 aa)). Disordered stretches follow at residues 640-689 (QGTK…DHSE), 735-757 (MKPE…HPSS), 775-796 (ARRR…TGAE), and 803-822 (RVTQ…PGEP). A compositionally biased stretch (basic and acidic residues) spans 671–689 (KSFEEGKEEPQGCAGDHSE). Phosphoserine is present on residues serine 688 and serine 744.

This sequence belongs to the DNA polymerase type-B-like family. Associates with the cleavage and polyadenylation specificity factor (CPSF) complex. Interacts with CPSF1 and CPSF3; the interaction is direct. Interacts with PIP5K1A. Requires Mg(2+) as cofactor. It depends on Mn(2+) as a cofactor. Post-translationally, phosphorylated by CK1 in the proline-rich (Pro-rich) region.

Its subcellular location is the nucleus. It is found in the nucleolus. The protein localises to the nucleus speckle. It carries out the reaction RNA(n) + UTP = RNA(n)-3'-uridine ribonucleotide + diphosphate. It catalyses the reaction RNA(n) + ATP = RNA(n)-3'-adenine ribonucleotide + diphosphate. With respect to regulation, adenylyltransferase activity is specifically phosphatidylinositol 4,5-bisphosphate (PtdIns(4,5)P2). Poly(A) polymerase that creates the 3'-poly(A) tail of specific pre-mRNAs. Localizes to nuclear speckles together with PIP5K1A and mediates polyadenylation of a select set of mRNAs, such as HMOX1. In addition to polyadenylation, it is also required for the 3'-end cleavage of pre-mRNAs: binds to the 3'UTR of targeted pre-mRNAs and promotes the recruitment and assembly of the CPSF complex on the 3'UTR of pre-mRNAs. In addition to adenylyltransferase activity, also has uridylyltransferase activity. However, the ATP ratio is higher than UTP in cells, suggesting that it functions primarily as a poly(A) polymerase. Acts as a specific terminal uridylyltransferase for U6 snRNA in vitro: responsible for a controlled elongation reaction that results in the restoration of the four 3'-terminal UMP-residues found in newly transcribed U6 snRNA. Not involved in replication-dependent histone mRNA degradation. The protein is Speckle targeted PIP5K1A-regulated poly(A) polymerase (Tut1) of Mus musculus (Mouse).